The chain runs to 786 residues: Ribosome biogenesis protein BOP1 homolog (786 aa).

Positions 1 to 11 are enriched in basic residues; sequence MTKKLTIKRKV. The disordered stretch occupies residues 1-161; it reads MTKKLTIKRK…DSDTSDEEDI (161 aa). Acidic residues-rich tracts occupy residues 28-37, 46-55, 62-74, and 86-103; these read DNEEEEEEDL, EDSTDDEGID, SSED…DEEG, and SGDD…EDDA. Basic and acidic residues predominate over residues 104 to 113; sequence DAKKSSKNND. Positions 151–160 are enriched in acidic residues; the sequence is ADSDTSDEED. WD repeat units lie at residues 447-488, 490-528, 572-614, 617-655, 658-697, 701-740, and 756-786; these read GHTD…RTIE, EDVV…KLLV, THFK…SQIP, KSKG…LIKK, TNSK…KPYQ, LHRN…DLLQ, and REEF…RLFT.

The protein belongs to the WD repeat BOP1/ERB1 family.

It is found in the nucleus. Its subcellular location is the nucleolus. The protein resides in the nucleoplasm. Functionally, required for maturation of ribosomal RNAs and formation of the large ribosomal subunit. The polypeptide is Ribosome biogenesis protein BOP1 homolog (Drosophila pseudoobscura pseudoobscura (Fruit fly)).